The following is a 228-amino-acid chain: 2,3-bisphosphoglycerate-dependent phosphoglycerate mutase (228 aa).

Substrate contacts are provided by residues 8 to 15 (RHGQSQWN), 21 to 22 (TG), R60, 87 to 90 (ERHY), K98, 114 to 115 (RR), and 180 to 181 (GN). H9 serves as the catalytic Tele-phosphohistidine intermediate. E87 acts as the Proton donor/acceptor in catalysis.

This sequence belongs to the phosphoglycerate mutase family. BPG-dependent PGAM subfamily. As to quaternary structure, homodimer.

It carries out the reaction (2R)-2-phosphoglycerate = (2R)-3-phosphoglycerate. Its pathway is carbohydrate degradation; glycolysis; pyruvate from D-glyceraldehyde 3-phosphate: step 3/5. Its function is as follows. Catalyzes the interconversion of 2-phosphoglycerate and 3-phosphoglycerate. The polypeptide is 2,3-bisphosphoglycerate-dependent phosphoglycerate mutase (Erythrobacter litoralis (strain HTCC2594)).